The following is a 142-amino-acid chain: ATP synthase epsilon chain (142 aa).

It belongs to the ATPase epsilon chain family. F-type ATPases have 2 components, CF(1) - the catalytic core - and CF(0) - the membrane proton channel. CF(1) has five subunits: alpha(3), beta(3), gamma(1), delta(1), epsilon(1). CF(0) has three main subunits: a, b and c.

The protein resides in the cell inner membrane. Functionally, produces ATP from ADP in the presence of a proton gradient across the membrane. This chain is ATP synthase epsilon chain, found in Shewanella oneidensis (strain ATCC 700550 / JCM 31522 / CIP 106686 / LMG 19005 / NCIMB 14063 / MR-1).